Here is a 586-residue protein sequence, read N- to C-terminus: Frizzled-10-A (586 aa).

Residues 1–26 form the signal peptide; the sequence is MDVSGVTGLLRGTALLLVLAAALCSA. Over 27–230 the chain is Extracellular; the sequence is ISSINPDRSG…DVYWSKDDKK (204 aa). An FZ domain is found at 35 to 156; sequence SGDGRCQAIE…NDPNYLCMEA (122 aa). 5 disulfides stabilise this stretch: Cys-40/Cys-101, Cys-48/Cys-94, Cys-85/Cys-123, Cys-112/Cys-153, and Cys-116/Cys-140. Asn-54 carries N-linked (GlcNAc...) asparagine glycosylation. N-linked (GlcNAc...) asparagine glycosylation is present at Asn-159. The disordered stretch occupies residues 161–199; it reads TDETPRGSSMLPPIFRPQRPSSGHEIYPKDPTSRSSCEN. Residues 231-251 form a helical membrane-spanning segment; it reads FAFIWIAIWSILCFFSSAFTV. Residues 252–267 are Cytoplasmic-facing; it reads LTFLVDPLRFKYPERP. The chain crosses the membrane as a helical span at residues 268–288; the sequence is IIFLSMCYCVYSVGYIIRLFA. The Extracellular segment spans residues 289-315; it reads GADSIACDRDSGQLYVIQEGLESTGCT. The chain crosses the membrane as a helical span at residues 316–336; the sequence is IVFLILYYFGMASSLWWVILT. Residues 337–356 lie on the Cytoplasmic side of the membrane; the sequence is LTWFLAAGKKWGHEAIEANS. The helical transmembrane segment at 357 to 377 threads the bilayer; the sequence is SYFHLAAWAIPAVKTIMILVM. The Extracellular portion of the chain corresponds to 378–401; sequence RRVAGDELTGVCYVGSMDVNALTG. A helical transmembrane segment spans residues 402–422; it reads FVLIPLACYLIIGTSFILSGF. Residues 423 to 448 are Cytoplasmic-facing; it reads VALFHIRRVMKTGGENTDKLEKLMVR. A helical membrane pass occupies residues 449 to 469; it reads IGVFSVLYTVPATCVIACYFY. Residues 470–507 are Extracellular-facing; that stretch reads ERLNMDFWKILATQDKCKMDSQTKTLDCTMTSSIPAVE. Residues 508-528 form a helical membrane-spanning segment; it reads IFMVKIFMLLVVGITSGMWIW. Over 529-586 the chain is Cytoplasmic; the sequence is TSKTVQSWQNVFSKRLKKRNRSKPASVITSAGIYKKPQHPPKVHHGKYESALQSPTCV. A Lys-Thr-X-X-X-Trp motif, mediates interaction with the PDZ domain of Dvl family members motif is present at residues 531–536; sequence KTVQSW. The interval 563–586 is disordered; the sequence is KKPQHPPKVHHGKYESALQSPTCV. Positions 564–573 are enriched in basic residues; that stretch reads KPQHPPKVHH. Residues 584–586 carry the PDZ-binding motif; sequence TCV.

The protein belongs to the G-protein coupled receptor Fz/Smo family. As to expression, expressed in liver, lung, brain, testis, stomach, kidney, eye, skeletal muscle and skin.

The protein resides in the cell membrane. Functionally, receptor for Wnt proteins. Most of frizzled receptors are coupled to the beta-catenin canonical signaling pathway, which leads to the activation of disheveled proteins, inhibition of GSK-3 kinase, nuclear accumulation of beta-catenin and activation of Wnt target genes. A second signaling pathway involving PKC and calcium fluxes has been seen for some family members, but it is not yet clear if it represents a distinct pathway or if it can be integrated in the canonical pathway, as PKC seems to be required for Wnt-mediated inactivation of GSK-3 kinase. Both pathways seem to involve interactions with G-proteins. May be involved in transduction and intercellular transmission of polarity information during tissue morphogenesis and/or in differentiated tissues. Activated by Wnt8. Could have an antagonizing activity in the morphogenesis during development. The polypeptide is Frizzled-10-A (fzd10-a) (Xenopus laevis (African clawed frog)).